Here is a 236-residue protein sequence, read N- to C-terminus: uncharacterized protein (236 aa).

The NADP(+) site is built by Asp-22, Asn-49, and Lys-82. Residues Ser-100 and Tyr-114 each act as proton donor in the active site. Residues Tyr-114 and Lys-118 each coordinate NADP(+). Residue Lys-118 is the Lowers pKa of active site Tyr of the active site.

This sequence belongs to the short-chain dehydrogenases/reductases (SDR) family.

Its subcellular location is the cytoplasm. It is found in the nucleus. This is an uncharacterized protein from Schizosaccharomyces pombe (strain 972 / ATCC 24843) (Fission yeast).